The sequence spans 262 residues: Vibriobactin-specific 2,3-dihydro-2,3-dihydroxybenzoate dehydrogenase (262 aa).

Residue 12–36 (LLVGSARGIGFSVLEHLLQAGAQVM) participates in NAD(+) binding. Serine 145 is a substrate binding site. Tyrosine 158 serves as the catalytic Proton acceptor.

The protein belongs to the short-chain dehydrogenases/reductases (SDR) family.

The enzyme catalyses (2S,3S)-2,3-dihydroxy-2,3-dihydrobenzoate + NAD(+) = 2,3-dihydroxybenzoate + NADH + H(+). It functions in the pathway siderophore biosynthesis; vibriobactin biosynthesis. Its function is as follows. Involved in an early step of the biosynthesis of the catechol siderophore vibriobactin. Vibriobactin is a chelating compound involved in transporting iron from the bacterial environment into the cell cytoplasm. In Vibrio cholerae serotype O1 (strain ATCC 39315 / El Tor Inaba N16961), this protein is Vibriobactin-specific 2,3-dihydro-2,3-dihydroxybenzoate dehydrogenase (vibA).